Here is a 413-residue protein sequence, read N- to C-terminus: MYDPERRWSLSFAGCGFLGFYHVGATLCLSERAPHLLRDARTFFGCSAGALHAVTFVCSLPLGRIMEILMDLVRKARSRNIGTLHPFFNINKCIRDGLQESLPDNVHQVISGKVHISLTRVSDGENVLVSEFHSKDEVVDALVCSCFIPLFSGLIPPSFRGERYVDGGVSDNVPVLDAKTTITVSPFYGEHDICPKVKSTNFFHVNITNLSLRLCTGNLQLLTRALFPSDVKVMGELCYQGYLDAFRFLEENGICNGPQRSLSLSLVAPEACLENGKLVGDKVPVSLCFTDENIWETLSPELSTALSEAIKDREGYLSKVCNLLPVRILSYIMLPCSLPVESAIAAVHRLVTWLPDIQDDIQWLQWATSQVCARMTMCLLPSTRSRASKDDHRMLKHGHHPSPHKPQGNSAGL.

Residues 1 to 42 (MYDPERRWSLSFAGCGFLGFYHVGATLCLSERAPHLLRDART) are Cytoplasmic-facing. The 170-residue stretch at 10 to 179 (LSFAGCGFLG…SDNVPVLDAK (170 aa)) folds into the PNPLA domain. A GXGXXG motif is present at residues 14 to 19 (GCGFLG). A helical; Signal-anchor for type II membrane protein transmembrane segment spans residues 43-63 (FFGCSAGALHAVTFVCSLPLG). The GXSXG motif lies at 45-49 (GCSAG). Residue Ser47 is the Nucleophile of the active site. Residues 64–413 (RIMEILMDLV…HKPQGNSAGL (350 aa)) lie on the Lumenal side of the membrane. Asp166 serves as the catalytic Proton acceptor. The short motif at 166–168 (DGG) is the DGA/G element. Asn206 and Asn209 each carry an N-linked (GlcNAc...) asparagine glycan. The tract at residues 389–413 (KDDHRMLKHGHHPSPHKPQGNSAGL) is disordered. The segment covering 394-403 (MLKHGHHPSP) has biased composition (basic residues).

As to expression, restricted to adipose tissue. Expressed in inguinal and epididymal white adipose tissues and in interscapular brown adipose tissue. Also expressed in liver in response to high-sucrose diet.

The protein localises to the membrane. It localises to the lipid droplet. The catalysed reaction is a 1-acyl-sn-glycero-3-phosphate + an acyl-CoA = a 1,2-diacyl-sn-glycero-3-phosphate + CoA. The enzyme catalyses a triacylglycerol + H2O = a diacylglycerol + a fatty acid + H(+). It catalyses the reaction a 1-acylglycerol + a 1,3-diacylglycerol = a triacylglycerol + glycerol. It carries out the reaction a 1-acylglycerol + a 1,2-diacylglycerol = a triacylglycerol + glycerol. The catalysed reaction is 2 a 1-acylglycerol = a 1,2-diacylglycerol + glycerol. The enzyme catalyses 1-(9Z-octadecenoyl)-sn-glycero-3-phosphate + (9Z)-octadecenoyl-CoA = 1,2-di-(9Z-octadecenoyl)-sn-glycero-3-phosphate + CoA. It catalyses the reaction 1-(9Z-octadecenoyl)-sn-glycero-3-phosphate + hexadecanoyl-CoA = 1-(9Z)-octadecenoyl-2-hexadecanoyl-sn-glycero-3-phosphate + CoA. It carries out the reaction 1-(9Z-octadecenoyl)-sn-glycero-3-phosphate + (9Z,12Z)-octadecadienoyl-CoA = 1-(9Z)-octadecenoyl-2-(9Z,12Z)-octadecadienoyl-sn-glycero-3-phosphate + CoA. The catalysed reaction is 1-(9Z-octadecenoyl)-sn-glycero-3-phosphate + (5Z,8Z,11Z,14Z)-eicosatetraenoyl-CoA = 1-(9Z)-octadecenoyl-2-(5Z,8Z,11Z,14Z)-eicosatetraenoyl-sn-glycero-3-phosphate + CoA. The enzyme catalyses 2 1-(9Z-octadecenoyl)-glycerol = 1,2-di-(9Z-octadecenoyl)-glycerol + glycerol. It catalyses the reaction 1-(9Z-octadecenoyl)-glycerol + 1,2-di-(9Z-octadecenoyl)-glycerol = 1,2,3-tri-(9Z-octadecenoyl)-glycerol + glycerol. It carries out the reaction 1-(9Z-octadecenoyl)-glycerol + 1,3-di-(9Z-octadecenoyl)-glycerol = 1,2,3-tri-(9Z-octadecenoyl)-glycerol + glycerol. The catalysed reaction is 1,2,3-tri-(9Z-octadecenoyl)-glycerol + H2O = 1,3-di-(9Z-octadecenoyl)-glycerol + (9Z)-octadecenoate + H(+). The enzyme catalyses a 1,2-diacyl-sn-glycero-3-phosphocholine + H2O = a 1-acyl-sn-glycero-3-phosphocholine + a fatty acid + H(+). Its pathway is phospholipid metabolism. It functions in the pathway glycerolipid metabolism. Specifically catalyzes coenzyme A (CoA)-dependent acylation of 1-acyl-sn-glycerol 3-phosphate (2-lysophosphatidic acid/LPA) to generate phosphatidic acid (PA), an important metabolic intermediate and precursor for both triglycerides and glycerophospholipids. Does not esterify other lysophospholipids. Acyl donors are long chain (at least C16) fatty acyl-CoAs: arachidonoyl-CoA, linoleoyl-CoA, oleoyl-CoA and at a lesser extent palmitoyl-CoA. Additionally possesses low triacylglycerol lipase and CoA-independent acylglycerol transacylase activities and thus may play a role in acyl-chain remodeling of triglycerides. In vitro may express hydrolytic activity against glycerolipids triacylglycerol, diacylglycerol and monoacylglycerol, with a strong preference for oleic acid as the acyl moiety. However, the triacylglycerol hydrolase activity is controversial and may be very low. Possesses phospholipase A2 activity. In Mus musculus (Mouse), this protein is 1-acylglycerol-3-phosphate O-acyltransferase Pnpla3.